Reading from the N-terminus, the 822-residue chain is Glycerol-3-phosphate acyltransferase (822 aa).

The HXXXXD motif signature appears at 306 to 311 (CHRSHM). Residues 803–822 (ASSSAEMEAESQAVEETTQE) are disordered.

It belongs to the GPAT/DAPAT family.

The protein localises to the cell inner membrane. The catalysed reaction is sn-glycerol 3-phosphate + an acyl-CoA = a 1-acyl-sn-glycero-3-phosphate + CoA. The protein operates within phospholipid metabolism; CDP-diacylglycerol biosynthesis; CDP-diacylglycerol from sn-glycerol 3-phosphate: step 1/3. The sequence is that of Glycerol-3-phosphate acyltransferase from Pectobacterium carotovorum subsp. carotovorum (strain PC1).